The sequence spans 371 residues: MTAESAPPPPPQPETLAAVKEERGEAAAAGAGVPAEAAGRGAGGRRRKRPLQRGKPPYSYIALIAMAIAHAPERRLTLGGIYKFITERFPFYRDNPKKWQNSIRHNLTLNDCFLKIPREAGRPGKGNYWALDPNAEDMFESGSFLRRRKRFKRSDLSTYPAYMHDAAAAAAAAAAAIFPGAVPAARPAYPGAVYAGYAPPLAAPPPVYYPAASPGPCRVFGLVPERPLSPDLGPAPSAAGGSCAFAAAAGAAGTGSFQPAVCTGARPVNPAAYAAAYAGPDGAYPQGASSALFAAAAGRLAGPASPPAGGGSGGVEATVDFYGRTSPGQFGAALGPCYNPGGQLGAGGGGAYHSRHATAYPGAVDRFVSAM.

Positions 21–53 are disordered; it reads EERGEAAAAGAGVPAEAAGRGAGGRRRKRPLQR. Residues 26–39 are compositionally biased toward low complexity; sequence AAAAGAGVPAEAAG. Residues 43-52 show a composition bias toward basic residues; it reads GGRRRKRPLQ. Positions 55–149 form a DNA-binding region, fork-head; that stretch reads KPPYSYIALI…ESGSFLRRRK (95 aa).

Post-translationally, phosphorylated. Expressed in Rathke pouch, in thyroid, and in the epithelium of the pharyngeal wall and arches, whereas it is absent in the epithelium of the pharyngeal pouches.

It localises to the nucleus. Functionally, transcription factor that binds consensus sites on a variety of gene promoters and activate their transcription. Involved in proper palate formation, most probably through the expression of MSX1 and TGFB3 genes which are direct targets of this transcription factor. Also implicated in thyroid gland morphogenesis. May indirectly play a role in cell growth and migration through the regulation of WNT5A expression. The sequence is that of Forkhead box protein E1 (Foxe1) from Mus musculus (Mouse).